We begin with the raw amino-acid sequence, 253 residues long: Tetraspanin-11 (253 aa).

The next 4 membrane-spanning stretches (helical) occupy residues 19–39 (LLFI…AVGI), 63–83 (VLIF…GAII), 93–113 (YFCL…LAHV), and 220–240 (LLLM…GMVL).

This sequence belongs to the tetraspanin (TM4SF) family.

Its subcellular location is the membrane. The chain is Tetraspanin-11 (Tspan11) from Rattus norvegicus (Rat).